The sequence spans 629 residues: tRNA uridine 5-carboxymethylaminomethyl modification enzyme MnmG (629 aa).

Residues 13-18 (GGGHAG), valine 125, and serine 180 contribute to the FAD site. 273–287 (GPRYCPSIEDKVMRF) lines the NAD(+) pocket. Glutamine 370 provides a ligand contact to FAD.

It belongs to the MnmG family. As to quaternary structure, homodimer. Heterotetramer of two MnmE and two MnmG subunits. Requires FAD as cofactor.

It localises to the cytoplasm. Its function is as follows. NAD-binding protein involved in the addition of a carboxymethylaminomethyl (cmnm) group at the wobble position (U34) of certain tRNAs, forming tRNA-cmnm(5)s(2)U34. This Salmonella arizonae (strain ATCC BAA-731 / CDC346-86 / RSK2980) protein is tRNA uridine 5-carboxymethylaminomethyl modification enzyme MnmG.